The sequence spans 557 residues: ADP-ribosylation factor-binding protein GGA1 (557 aa).

One can recognise a VHS domain in the interval 29-165 (ACRSTLPEPD…LLKYKGYTFP (137 aa)). The 126-residue stretch at 192 to 317 (ERAQAAKLEE…LLKRYKSIKG (126 aa)) folds into the GAT domain. Threonine 348 carries the post-translational modification Phosphothreonine. A phosphoserine mark is found at serine 353, serine 357, serine 378, and serine 394. Positions 440–556 (AQSQRHILNQ…EESGTTSLPT (117 aa)) constitute a GAE domain.

In terms of assembly, binds to ARF1 and ARF2.

The protein resides in the golgi apparatus. Its subcellular location is the trans-Golgi network. Its function is as follows. May play a role in the regulation of membrane traffic through the trans-Golgi network. This Saccharomyces cerevisiae (strain ATCC 204508 / S288c) (Baker's yeast) protein is ADP-ribosylation factor-binding protein GGA1 (GGA1).